We begin with the raw amino-acid sequence, 295 residues long: Porphobilinogen deaminase (295 aa).

Residue cysteine 241 is modified to S-(dipyrrolylmethanemethyl)cysteine.

It belongs to the HMBS family. In terms of assembly, monomer. Dipyrromethane serves as cofactor.

It catalyses the reaction 4 porphobilinogen + H2O = hydroxymethylbilane + 4 NH4(+). Its pathway is porphyrin-containing compound metabolism; protoporphyrin-IX biosynthesis; coproporphyrinogen-III from 5-aminolevulinate: step 2/4. Functionally, tetrapolymerization of the monopyrrole PBG into the hydroxymethylbilane pre-uroporphyrinogen in several discrete steps. The chain is Porphobilinogen deaminase from Lachnospira eligens (strain ATCC 27750 / DSM 3376 / VPI C15-48 / C15-B4) (Eubacterium eligens).